Here is a 396-residue protein sequence, read N- to C-terminus: MDDYKRILITKILKNEVTEALGCTEVGLIGYAVSLCNISDPFSIEKIELTLNNGSFKNAYAVGVPNTKKYGILPAVVGGLLGDHKNKLLVFNGIKYSQKLEDFIKERLKIRVINSPLYCGVKIKDNSGNTFESLIKDNHLNVVIPKINNKLISEINGSEKEEYKNLELLDFLEYIDEIPEEIIQLVEKTIYTNNNLIKGDFLNFGNDCLSNMVNKTTSACNTRMIGENMPAMSVAKSGNMGIMATLPIIAYDYSNEQNQEKLIKSILLSVLVTIYATYKSSYLSSMCGCVSKGGMGAVIGLCYYKNGKNIKKLDSAARTFTANLPGIICDGGKVGCALKLASGCFAAYSSLFVDISYENGIVGKNFKECVENISEISKIMGDLDSDIVKIMSKKEI.

Cys-23 (proton acceptor) is an active-site residue. The [4Fe-4S] cluster site is built by Cys-287, Cys-329, and Cys-336.

It belongs to the L-cysteine desulfidase family. Homotrimer. The cofactor is [4Fe-4S] cluster.

The catalysed reaction is L-cysteine + H2O = hydrogen sulfide + pyruvate + NH4(+) + H(+). Functionally, catalyzes the cleavage of L-cysteine to form 2-aminoprop-2-enoate and sulfide. The former then spontaneously hydrolyzes to pyruvate and NH(3). May be responsible for the production of sulfide required for the biosynthesis of iron-sulfur centers in this archaea. The chain is L-cysteine desulfidase from Methanococcus maripaludis (strain DSM 14266 / JCM 13030 / NBRC 101832 / S2 / LL).